We begin with the raw amino-acid sequence, 137 residues long: Protein yippee-like F37A8.5 (137 aa).

The segment at 1–20 is disordered; the sequence is MHFRMKVLENSSKHNTPKKQ. The 98-residue stretch at 32-129 folds into the Yippee domain; that stretch reads RCYSCIHCRA…IELAHMVKDN (98 aa). Residues C36, C39, C92, and C95 each coordinate Zn(2+).

It belongs to the yippee family.

The polypeptide is Protein yippee-like F37A8.5 (Caenorhabditis elegans).